We begin with the raw amino-acid sequence, 52 residues long: Photosystem II reaction center protein M (52 aa).

A helical transmembrane segment spans residues 6 to 26 (FGFAASLLFVGVPTIFLIGLF). The disordered stretch occupies residues 31–52 (DGEKSSFYSDTSKGRLSPEPKK). The span at 42–52 (SKGRLSPEPKK) shows a compositional bias: basic and acidic residues.

It belongs to the PsbM family. As to quaternary structure, PSII is composed of 1 copy each of membrane proteins PsbA, PsbB, PsbC, PsbD, PsbE, PsbF, PsbH, PsbI, PsbJ, PsbK, PsbL, PsbM, PsbT, PsbX, PsbY, Psb30/Ycf12, peripheral proteins PsbO, CyanoQ (PsbQ), PsbU, PsbV and a large number of cofactors. It forms dimeric complexes.

The protein resides in the cellular thylakoid membrane. Functionally, one of the components of the core complex of photosystem II (PSII). PSII is a light-driven water:plastoquinone oxidoreductase that uses light energy to abstract electrons from H(2)O, generating O(2) and a proton gradient subsequently used for ATP formation. It consists of a core antenna complex that captures photons, and an electron transfer chain that converts photonic excitation into a charge separation. This subunit is found at the monomer-monomer interface. This Prochlorococcus marinus (strain NATL1A) protein is Photosystem II reaction center protein M.